The following is a 460-amino-acid chain: Elongation factor 1-alpha 3 (460 aa).

The region spanning 6–243 (KTHINIVVIG…DCIIPPQRPT (238 aa)) is the tr-type G domain. The G1 stretch occupies residues 15–22 (GHVDSGKS). Residues 71 to 75 (GITID) form a G2 region. The interval 92 to 95 (DAPG) is G3. Residues 154-157 (NKMD) form a G4 region. The tract at residues 195–197 (SGF) is G5. 5-glutamyl glycerylphosphorylethanolamine occurs at positions 302 and 375.

The protein belongs to the TRAFAC class translation factor GTPase superfamily. Classic translation factor GTPase family. EF-Tu/EF-1A subfamily.

The protein localises to the cytoplasm. In terms of biological role, this protein promotes the GTP-dependent binding of aminoacyl-tRNA to the A-site of ribosomes during protein biosynthesis. The sequence is that of Elongation factor 1-alpha 3 (eft-3) from Oscheius tipulae.